The chain runs to 442 residues: Elongation factor 1-gamma (442 aa).

The GST N-terminal domain occupies 2-87 (AAGTLYTYPE…YLSNDVLRGS (86 aa)). Positions 88–216 (TPQASAQVLQ…VKLCEKMAQF (129 aa)) constitute a GST C-terminal domain. Basic and acidic residues-rich tracts occupy residues 227 to 242 (KKEAPIKKEKGGKEGG) and 249 to 263 (QEKKEKKKEEKKAAP). A disordered region spans residues 227-273 (KKEAPIKKEKGGKEGGKQQPQQQEKKEKKKEEKKAAPAEEEMDECEA). The 162-residue stretch at 281 to 442 (AKDPFAHLPK…KPFNQGKIFK (162 aa)) folds into the EF-1-gamma C-terminal domain.

In terms of assembly, EF-1 is composed of four subunits: alpha, beta, delta, and gamma.

Probably plays a role in anchoring the complex to other cellular components. The protein is Elongation factor 1-gamma (eef1g) of Danio rerio (Zebrafish).